The sequence spans 745 residues: Phosphoribosylformylglycinamidine synthase subunit PurL (745 aa).

His41 is an active-site residue. 2 residues coordinate ATP: Tyr44 and Lys83. Position 85 (Glu85) interacts with Mg(2+). Substrate-binding positions include 86–89 (SHNH) and Arg108. His87 acts as the Proton acceptor in catalysis. A Mg(2+)-binding site is contributed by Asp109. Gln232 contacts substrate. Asp260 lines the Mg(2+) pocket. 304 to 306 (ESQ) is a binding site for substrate. Positions 494 and 531 each coordinate ATP. Asn532 serves as a coordination point for Mg(2+). A substrate-binding site is contributed by Ser534.

Belongs to the FGAMS family. As to quaternary structure, monomer. Part of the FGAM synthase complex composed of 1 PurL, 1 PurQ and 2 PurS subunits.

It is found in the cytoplasm. It catalyses the reaction N(2)-formyl-N(1)-(5-phospho-beta-D-ribosyl)glycinamide + L-glutamine + ATP + H2O = 2-formamido-N(1)-(5-O-phospho-beta-D-ribosyl)acetamidine + L-glutamate + ADP + phosphate + H(+). It functions in the pathway purine metabolism; IMP biosynthesis via de novo pathway; 5-amino-1-(5-phospho-D-ribosyl)imidazole from N(2)-formyl-N(1)-(5-phospho-D-ribosyl)glycinamide: step 1/2. Functionally, part of the phosphoribosylformylglycinamidine synthase complex involved in the purines biosynthetic pathway. Catalyzes the ATP-dependent conversion of formylglycinamide ribonucleotide (FGAR) and glutamine to yield formylglycinamidine ribonucleotide (FGAM) and glutamate. The FGAM synthase complex is composed of three subunits. PurQ produces an ammonia molecule by converting glutamine to glutamate. PurL transfers the ammonia molecule to FGAR to form FGAM in an ATP-dependent manner. PurS interacts with PurQ and PurL and is thought to assist in the transfer of the ammonia molecule from PurQ to PurL. This Aquifex aeolicus (strain VF5) protein is Phosphoribosylformylglycinamidine synthase subunit PurL.